Here is an 81-residue protein sequence, read N- to C-terminus: Bacteriochlorophyll c-binding protein (81 aa).

His25 is a binding site for a bacteriochlorophyll c.

This sequence belongs to the BChl C/E-binding protein family.

It is found in the chlorosome. The protein resides in the chlorosome envelope. Component of the photosynthetic apparatus. The light harvesting B740 complex binds bacteriochlorophyll c. This Prosthecochloris aestuarii (strain DSM 271 / SK 413) protein is Bacteriochlorophyll c-binding protein (csmA).